The primary structure comprises 161 residues: Allophycocyanin beta chain (161 aa).

The residue at position 71 (N71) is an N4-methylasparagine. C81 lines the (2R,3E)-phycocyanobilin pocket.

Belongs to the phycobiliprotein family. In terms of assembly, heterodimer of an alpha and a beta chain. Contains one covalently linked phycocyanobilin chromophore.

It localises to the cellular thylakoid membrane. Light-harvesting photosynthetic bile pigment-protein from the phycobiliprotein complex. Allophycocyanin has a maximum absorption at approximately 650 nanometers. The sequence is that of Allophycocyanin beta chain (apcB) from Mastigocladus laminosus (Fischerella sp.).